The chain runs to 502 residues: Bone morphogenetic protein receptor type-1B (502 aa).

A signal peptide spans Met1–Thr13. A disordered region spans residues Met1–Thr24. At Lys14–Lys126 the chain is on the extracellular side. Disulfide bonds link Cys32–Cys53, Cys34–Cys38, Cys47–Cys71, Cys81–Cys95, and Cys96–Cys102. Residues Ala127 to Phe148 form a helical membrane-spanning segment. Topologically, residues Arg149 to Leu502 are cytoplasmic. Residues Glu174–Gln203 form the GS domain. The Protein kinase domain maps to Ile204–Met494. ATP is bound by residues Ile210–Val218 and Lys231. Asp332 (proton acceptor) is an active-site residue.

Belongs to the protein kinase superfamily. TKL Ser/Thr protein kinase family. TGFB receptor subfamily. Interacts with high affinity with GDF5; positively regulates chondrocyte differentiation. Interacts with SCUBE3. Interacts with TSC22D1/TSC-22. Interacts with TGFBR3. Requires Mg(2+) as cofactor. Mn(2+) is required as a cofactor. Autophosphorylated.

It is found in the cell membrane. The enzyme catalyses L-threonyl-[receptor-protein] + ATP = O-phospho-L-threonyl-[receptor-protein] + ADP + H(+). It carries out the reaction L-seryl-[receptor-protein] + ATP = O-phospho-L-seryl-[receptor-protein] + ADP + H(+). Its function is as follows. On ligand binding, forms a receptor complex consisting of two type II and two type I transmembrane serine/threonine kinases. Type II receptors phosphorylate and activate type I receptors which autophosphorylate, then bind and activate SMAD transcriptional regulators. Receptor for BMP7/OP-1. Receptor for GDF5. Positively regulates chondrocyte differentiation through GDF5 interaction. This is Bone morphogenetic protein receptor type-1B (Bmpr1b) from Mus musculus (Mouse).